A 76-amino-acid polypeptide reads, in one-letter code: Acyl carrier protein (76 aa).

Residues Met1–Leu75 form the Carrier domain. Ser35 bears the O-(pantetheine 4'-phosphoryl)serine mark.

This sequence belongs to the acyl carrier protein (ACP) family. Post-translationally, 4'-phosphopantetheine is transferred from CoA to a specific serine of apo-ACP by AcpS. This modification is essential for activity because fatty acids are bound in thioester linkage to the sulfhydryl of the prosthetic group.

The protein localises to the cytoplasm. It functions in the pathway lipid metabolism; fatty acid biosynthesis. In terms of biological role, carrier of the growing fatty acid chain in fatty acid biosynthesis. The sequence is that of Acyl carrier protein from Phytoplasma australiense.